Reading from the N-terminus, the 1025-residue chain is Multidrug resistance protein MdtC (1025 aa).

12 helical membrane passes run 3–23, 333–353, 360–380, 387–407, 431–451, 463–483, 528–548, 853–873, 875–895, 897–917, 953–973, and 984–1004; these read FFAL…AITL, EVEQ…FLFL, IIPA…MYLC, LSLM…IVVL, VGFT…PLLL, FAVT…TLTP, LVGV…ISIP, VILI…LYES, VHPL…LLAL, LFNA…IGIV, PIMM…LSGG, and ITIV…TPVV.

This sequence belongs to the resistance-nodulation-cell division (RND) (TC 2.A.6) family. MdtC subfamily. Part of a tripartite efflux system composed of MdtA, MdtB and MdtC. MdtC forms a heteromultimer with MdtB.

It localises to the cell inner membrane. The protein is Multidrug resistance protein MdtC of Shigella sonnei (strain Ss046).